Reading from the N-terminus, the 273-residue chain is Thiazole synthase (273 aa).

K111 serves as the catalytic Schiff-base intermediate with DXP. 1-deoxy-D-xylulose 5-phosphate-binding positions include G172, 198–199 (AG), and 220–221 (NS). The tract at residues 251-273 (RLPRRGQASASSPTTGLISGKDK) is disordered. Positions 258-267 (ASASSPTTGL) are enriched in polar residues.

This sequence belongs to the ThiG family. Homotetramer. Forms heterodimers with either ThiH or ThiS.

It is found in the cytoplasm. The enzyme catalyses [ThiS sulfur-carrier protein]-C-terminal-Gly-aminoethanethioate + 2-iminoacetate + 1-deoxy-D-xylulose 5-phosphate = [ThiS sulfur-carrier protein]-C-terminal Gly-Gly + 2-[(2R,5Z)-2-carboxy-4-methylthiazol-5(2H)-ylidene]ethyl phosphate + 2 H2O + H(+). The protein operates within cofactor biosynthesis; thiamine diphosphate biosynthesis. Functionally, catalyzes the rearrangement of 1-deoxy-D-xylulose 5-phosphate (DXP) to produce the thiazole phosphate moiety of thiamine. Sulfur is provided by the thiocarboxylate moiety of the carrier protein ThiS. In vitro, sulfur can be provided by H(2)S. This is Thiazole synthase from Synechococcus sp. (strain CC9902).